Reading from the N-terminus, the 145-residue chain is Transmembrane protein CCDC163 (145 aa).

A helical transmembrane segment spans residues 38–54 (LIGLCICFFCSSGCIFL).

It is found in the membrane. In Homo sapiens (Human), this protein is Transmembrane protein CCDC163.